The chain runs to 333 residues: Atrochrysone carboxyl ACP thioesterase MYCFIDRAFT_190111 (333 aa).

Residues H108, H110, D112, and H113 each contribute to the Zn(2+) site. D112 functions as the Proton donor/acceptor in the catalytic mechanism.

It belongs to the metallo-beta-lactamase superfamily. Zn(2+) is required as a cofactor.

The enzyme catalyses atrochrysone carboxyl-[ACP] + H2O = atrochrysone carboxylate + holo-[ACP] + H(+). It participates in secondary metabolite biosynthesis. Its function is as follows. Atrochrysone carboxyl ACP thioesterase; part of the gene cluster that mediates the biosynthesis of an emodin derivative that may be involved in black Sigatoka disease of banana. The pathway begins with the synthesis of atrochrysone thioester by the polyketide synthase PKS8-1. The atrochrysone carboxyl ACP thioesterase MYCFIDRAFT_190111 then breaks the thioester bond and releases the atrochrysone carboxylic acid from PKS8-1. The decarboxylase MYCFIDRAFT_34057 then catalyzes the concerted decarboxylation-elimination required to convert atochrysone carboxylic acid into emodin anthrone, which is further oxidized to emodin by the anthrone oxygenase MYCFIDRAFT_34418. The functions of the other tailoring enzymes as well as the final product of the cluster have still to be identified. The sequence is that of Atrochrysone carboxyl ACP thioesterase MYCFIDRAFT_190111 from Pseudocercospora fijiensis (strain CIRAD86) (Black leaf streak disease fungus).